The primary structure comprises 353 residues: Putative 3-oxoacyl-[acyl-carrier-protein] synthase 3 (353 aa).

Residues Cys-122, His-268, and Asn-299 contribute to the active site.

Belongs to the thiolase-like superfamily. FabH family. As to quaternary structure, homodimer.

The protein localises to the cytoplasm. It carries out the reaction malonyl-[ACP] + acetyl-CoA + H(+) = 3-oxobutanoyl-[ACP] + CO2 + CoA. It participates in lipid metabolism; fatty acid biosynthesis. May catalyze the condensation reaction of fatty acid synthesis by the addition to an acyl acceptor of two carbons from malonyl-ACP. The chain is Putative 3-oxoacyl-[acyl-carrier-protein] synthase 3 from Campylobacter jejuni subsp. jejuni serotype O:2 (strain ATCC 700819 / NCTC 11168).